The chain runs to 153 residues: Transcriptional repressor NrdR (153 aa).

Residues 3–34 fold into a zinc finger; it reads CPSCFHNGTRVLDSRPVDEGRSIRRRRECESC. The ATP-cone domain maps to 49–139; the sequence is LIVVKKEGTR…VYRQFKDLNV (91 aa).

This sequence belongs to the NrdR family. Zn(2+) is required as a cofactor.

Its function is as follows. Negatively regulates transcription of bacterial ribonucleotide reductase nrd genes and operons by binding to NrdR-boxes. In Bacillus cytotoxicus (strain DSM 22905 / CIP 110041 / 391-98 / NVH 391-98), this protein is Transcriptional repressor NrdR.